Consider the following 146-residue polypeptide: Ribosome-binding factor A (146 aa).

A disordered region spans residues 122 to 146 (QQQFGSVDDVTENDIDEADDTEGKA). The segment covering 130–146 (DVTENDIDEADDTEGKA) has biased composition (acidic residues).

This sequence belongs to the RbfA family. Monomer. Binds 30S ribosomal subunits, but not 50S ribosomal subunits or 70S ribosomes.

It localises to the cytoplasm. Its function is as follows. One of several proteins that assist in the late maturation steps of the functional core of the 30S ribosomal subunit. Associates with free 30S ribosomal subunits (but not with 30S subunits that are part of 70S ribosomes or polysomes). Required for efficient processing of 16S rRNA. May interact with the 5'-terminal helix region of 16S rRNA. The polypeptide is Ribosome-binding factor A (Shewanella sp. (strain MR-7)).